Here is a 291-residue protein sequence, read N- to C-terminus: U3 small nucleolar ribonucleoprotein protein IMP4 (291 aa).

A Brix domain is found at P83–E264.

In terms of assembly, part of the small subunit (SSU) processome, composed of more than 70 proteins and the RNA chaperone small nucleolar RNA (snoRNA) U3. Component of a heterotrimeric complex containing IMP3, IMP4 and MPHOSPH10. Interacts with MPHOSPH10.

It localises to the nucleus. It is found in the nucleolus. Functionally, component of the 60-80S U3 small nucleolar ribonucleoprotein (U3 snoRNP). Required for the early cleavages during pre-18S ribosomal RNA processing. Part of the small subunit (SSU) processome, first precursor of the small eukaryotic ribosomal subunit. During the assembly of the SSU processome in the nucleolus, many ribosome biogenesis factors, an RNA chaperone and ribosomal proteins associate with the nascent pre-rRNA and work in concert to generate RNA folding, modifications, rearrangements and cleavage as well as targeted degradation of pre-ribosomal RNA by the RNA exosome. This Homo sapiens (Human) protein is U3 small nucleolar ribonucleoprotein protein IMP4.